The sequence spans 393 residues: NAD(P)H-quinone oxidoreductase subunit H, chloroplastic (393 aa).

It belongs to the complex I 49 kDa subunit family. In terms of assembly, NDH is composed of at least 16 different subunits, 5 of which are encoded in the nucleus.

The protein localises to the plastid. It is found in the chloroplast thylakoid membrane. The enzyme catalyses a plastoquinone + NADH + (n+1) H(+)(in) = a plastoquinol + NAD(+) + n H(+)(out). The catalysed reaction is a plastoquinone + NADPH + (n+1) H(+)(in) = a plastoquinol + NADP(+) + n H(+)(out). Functionally, NDH shuttles electrons from NAD(P)H:plastoquinone, via FMN and iron-sulfur (Fe-S) centers, to quinones in the photosynthetic chain and possibly in a chloroplast respiratory chain. The immediate electron acceptor for the enzyme in this species is believed to be plastoquinone. Couples the redox reaction to proton translocation, and thus conserves the redox energy in a proton gradient. This is NAD(P)H-quinone oxidoreductase subunit H, chloroplastic from Liriodendron tulipifera (Tuliptree).